Consider the following 150-residue polypeptide: uncharacterized protein (150 aa).

The HTH asnC-type domain occupies 5-66 (LDRTDKMLLE…KPNYKKLNLG (62 aa)). The segment at residues 24–43 (IAALSKKLGIPRTTVHYRIK) is a DNA-binding region (H-T-H motif).

This is an uncharacterized protein from Pyrococcus furiosus (strain ATCC 43587 / DSM 3638 / JCM 8422 / Vc1).